The following is a 104-amino-acid chain: Large ribosomal subunit protein bL21 (104 aa).

Belongs to the bacterial ribosomal protein bL21 family. In terms of assembly, part of the 50S ribosomal subunit. Contacts protein L20.

In terms of biological role, this protein binds to 23S rRNA in the presence of protein L20. The protein is Large ribosomal subunit protein bL21 of Moorella thermoacetica (strain ATCC 39073 / JCM 9320).